The sequence spans 482 residues: MTKRISAEEKLNRKPISRACVFCHEKHLQCDVGRPCQNCEKRNIGESCRDNVRKVRKTRGRTPRSGVMNLRRARREHEDELAIATKSRGAGEPGSTGLPQVPSLSTLFDANVDPVIDEELLPATYVDPLGPSDVELPTSGAESFGSVWASSEYTKLNEILGSPGIERPRKHVPSKYEPFAVPATAEHSPSPSTPIELLQDHAGLLFRNTLRRHISLDTAQSSYQASTQDTQASTVASSVSCEGAQFPASEAEYTSPYSFRQLVRSPEDLYRHQNSIFPHNYRQAYLELLNILRARFLSAQDEIAREEGPKQLHSIAQSIKTYYAPIFVTLTSNLIESDLKMHELILQRTLLEYENMSKMVNCIPMCIWRRSGEICYVSNEFISLTGFSRRELLMRRRFIMEFFDNHGIVDYFKLFNEYLAFSSKEGFSSTSDGQAVFSECNLLMANNSFLKCACIWTVKRDSFNIPMLVMGQFLPIFDMDHT.

A DNA-binding region (zn(2)-C6 fungal-type) is located at residues 20-48 (CVFCHEKHLQCDVGRPCQNCEKRNIGESC). In terms of domain architecture, PAS spans 350–422 (LLEYENMSKM…KLFNEYLAFS (73 aa)).

It belongs to the ERT1/acuK family.

The protein resides in the nucleus. Transcription factor which regulates nonfermentable carbon utilization. The sequence is that of Glucose starvation modulator protein 1 (GSM1) from Eremothecium gossypii (strain ATCC 10895 / CBS 109.51 / FGSC 9923 / NRRL Y-1056) (Yeast).